Consider the following 206-residue polypeptide: Probable metallo-hydrolase MJ0888 (206 aa).

Zn(2+) is bound by residues histidine 55, histidine 57, aspartate 59, histidine 60, histidine 130, aspartate 147, and histidine 190.

The protein belongs to the metallo-beta-lactamase superfamily. Zn(2+) is required as a cofactor.

The sequence is that of Probable metallo-hydrolase MJ0888 from Methanocaldococcus jannaschii (strain ATCC 43067 / DSM 2661 / JAL-1 / JCM 10045 / NBRC 100440) (Methanococcus jannaschii).